Consider the following 126-residue polypeptide: Small ribosomal subunit protein eS24 (126 aa).

A disordered region spans residues 98–126; sequence LYTKPQTSRKQRKEKKNRLKKAGKKTAKK. Positions 104–126 are enriched in basic residues; the sequence is TSRKQRKEKKNRLKKAGKKTAKK.

The protein belongs to the eukaryotic ribosomal protein eS24 family.

This chain is Small ribosomal subunit protein eS24 (rps24), found in Dictyostelium discoideum (Social amoeba).